Here is a 168-residue protein sequence, read N- to C-terminus: Cell division inhibitor SulA (168 aa).

Positions 105 to 111 (ALLTGNY) are ftsZ binding. The lon protease binding stretch occupies residues 161–168 (KIHSTLYH).

This sequence belongs to the SulA family. In terms of assembly, interacts with FtsZ. Post-translationally, is rapidly cleaved and degraded by the Lon protease once DNA damage is repaired.

Functionally, component of the SOS system and an inhibitor of cell division. Accumulation of SulA causes rapid cessation of cell division and the appearance of long, non-septate filaments. In the presence of GTP, binds a polymerization-competent form of FtsZ in a 1:1 ratio, thus inhibiting FtsZ polymerization and therefore preventing it from participating in the assembly of the Z ring. This mechanism prevents the premature segregation of damaged DNA to daughter cells during cell division. This is Cell division inhibitor SulA from Pectobacterium carotovorum subsp. carotovorum (strain PC1).